The chain runs to 178 residues: uncharacterized protein (178 aa).

One can recognise an N-acetyltransferase domain in the interval 9–173 (LTLRKMELED…IDVYMFSLLK (165 aa)).

This is an uncharacterized protein from Bacillus licheniformis.